A 121-amino-acid polypeptide reads, in one-letter code: DNA-directed RNA polymerase subunit Rpo8 (121 aa).

Belongs to the archaeal Rpo8 RNA polymerase subunit family. Part of the 13-subunit RNA polymerase complex. In terms of processing, this subunit is phosphorylated.

Its subcellular location is the cytoplasm. The catalysed reaction is RNA(n) + a ribonucleoside 5'-triphosphate = RNA(n+1) + diphosphate. Functionally, DNA-dependent RNA polymerase (RNAP) catalyzes the transcription of DNA into RNA using the four ribonucleoside triphosphates as substrates. This is DNA-directed RNA polymerase subunit Rpo8 from Sulfolobus acidocaldarius (strain ATCC 33909 / DSM 639 / JCM 8929 / NBRC 15157 / NCIMB 11770).